The chain runs to 59 residues: Large ribosomal subunit protein bL32c (59 aa).

The span at 1–19 shows a compositional bias: basic residues; that stretch reads MAVPKKRTSKAKKNARKAN. The tract at residues 1–24 is disordered; that stretch reads MAVPKKRTSKAKKNARKANWKNQA.

Belongs to the bacterial ribosomal protein bL32 family.

It is found in the plastid. The protein localises to the chloroplast. This chain is Large ribosomal subunit protein bL32c (rpl32), found in Porphyra purpurea (Red seaweed).